Consider the following 86-residue polypeptide: Mitochondrial import inner membrane translocase subunit Tim10 (86 aa).

The Twin CX3C motif motif lies at 29–54; it reads CQAKCIATAFKESELTKGEAVCLDRC. Cystine bridges form between cysteine 29–cysteine 54 and cysteine 33–cysteine 50.

It belongs to the small Tim family. Heterohexamer; composed of 3 copies of tim-9/tin-9.1 and 3 copies of tim-10/tin-10, named soluble 70 kDa complex. The complex associates with the tim-22 component of the TIM22 complex. Interacts with multi-pass transmembrane proteins in transit.

It is found in the mitochondrion inner membrane. Mitochondrial intermembrane chaperone that participates in the import and insertion of multi-pass transmembrane proteins into the mitochondrial inner membrane. May also be required for the transfer of beta-barrel precursors from the TOM complex to the sorting and assembly machinery (SAM complex) of the outer membrane. Acts as a chaperone-like protein that protects the hydrophobic precursors from aggregation and guide them through the mitochondrial intermembrane space. In Caenorhabditis briggsae, this protein is Mitochondrial import inner membrane translocase subunit Tim10 (tin-10).